We begin with the raw amino-acid sequence, 488 residues long: Protein nucleotidyltransferase YdiU (488 aa).

Positions 91, 93, 94, 114, 126, 127, 177, and 184 each coordinate ATP. Catalysis depends on aspartate 253, which acts as the Proton acceptor. Mg(2+) contacts are provided by asparagine 254 and aspartate 263. Aspartate 263 is a binding site for ATP.

The protein belongs to the SELO family. It depends on Mg(2+) as a cofactor. Mn(2+) serves as cofactor.

The catalysed reaction is L-seryl-[protein] + ATP = 3-O-(5'-adenylyl)-L-seryl-[protein] + diphosphate. It catalyses the reaction L-threonyl-[protein] + ATP = 3-O-(5'-adenylyl)-L-threonyl-[protein] + diphosphate. The enzyme catalyses L-tyrosyl-[protein] + ATP = O-(5'-adenylyl)-L-tyrosyl-[protein] + diphosphate. It carries out the reaction L-histidyl-[protein] + UTP = N(tele)-(5'-uridylyl)-L-histidyl-[protein] + diphosphate. The catalysed reaction is L-seryl-[protein] + UTP = O-(5'-uridylyl)-L-seryl-[protein] + diphosphate. It catalyses the reaction L-tyrosyl-[protein] + UTP = O-(5'-uridylyl)-L-tyrosyl-[protein] + diphosphate. Its function is as follows. Nucleotidyltransferase involved in the post-translational modification of proteins. It can catalyze the addition of adenosine monophosphate (AMP) or uridine monophosphate (UMP) to a protein, resulting in modifications known as AMPylation and UMPylation. This Bacillus cereus (strain AH187) protein is Protein nucleotidyltransferase YdiU.